Here is a 184-residue protein sequence, read N- to C-terminus: Photosystem I assembly protein Ycf3 (184 aa).

TPR repeat units follow at residues 31-64 (AFAY…DEDQ), 68-101 (SYTL…NSNL), and 131-164 (MEIS…APDN).

It belongs to the Ycf3 family.

It localises to the plastid. The protein localises to the chloroplast thylakoid membrane. Functionally, essential for the assembly of the photosystem I (PSI) complex. May act as a chaperone-like factor to guide the assembly of the PSI subunits. This chain is Photosystem I assembly protein Ycf3, found in Thalassiosira pseudonana (Marine diatom).